Here is a 433-residue protein sequence, read N- to C-terminus: 26S proteasome regulatory subunit 7 (433 aa).

The segment at 1–23 is disordered; sequence MPDYLGADQRKTKEEEKEDKPIR. Over residues 8-23 the composition is skewed to basic and acidic residues; it reads DQRKTKEEEKEDKPIR. 216 to 223 contacts ATP; sequence GPPGTGKT.

This sequence belongs to the AAA ATPase family. In terms of processing, phosphorylated. Dephosphorylated by ublcp1 which impairs psmc2 ATPase activity and disrupts 26S proteasome assembly.

Its subcellular location is the cytoplasm. It is found in the nucleus. In terms of biological role, the 26S proteasome is involved in the ATP-dependent degradation of ubiquitinated proteins. The regulatory (or ATPase) complex confers ATP dependency and substrate specificity to the 26S complex. This Xenopus laevis (African clawed frog) protein is 26S proteasome regulatory subunit 7 (psmc2).